The sequence spans 262 residues: Indole-3-glycerol phosphate synthase (262 aa).

It belongs to the TrpC family.

It catalyses the reaction 1-(2-carboxyphenylamino)-1-deoxy-D-ribulose 5-phosphate + H(+) = (1S,2R)-1-C-(indol-3-yl)glycerol 3-phosphate + CO2 + H2O. Its pathway is amino-acid biosynthesis; L-tryptophan biosynthesis; L-tryptophan from chorismate: step 4/5. This is Indole-3-glycerol phosphate synthase from Aromatoleum aromaticum (strain DSM 19018 / LMG 30748 / EbN1) (Azoarcus sp. (strain EbN1)).